The chain runs to 249 residues: Metallo-beta-lactamase type 2 (249 aa).

Residues Met1 to Gly22 form the signal peptide. Zn(2+)-binding residues include His98, His100, Asp102, His161, and Cys180. Lys183 serves as a coordination point for substrate. Position 222 (His222) interacts with Zn(2+).

This sequence belongs to the metallo-beta-lactamase superfamily. Class-B beta-lactamase family. In terms of assembly, monomer. Zn(2+) is required as a cofactor.

It localises to the periplasm. The enzyme catalyses a beta-lactam + H2O = a substituted beta-amino acid. Functionally, confers resistance to the different beta-lactams antibiotics (penicillin, cephalosporin and carbapenem) via the hydrolysis of the beta-lactam ring. This is Metallo-beta-lactamase type 2 (blaB5) from Elizabethkingia meningoseptica (Chryseobacterium meningosepticum).